A 491-amino-acid polypeptide reads, in one-letter code: AAA-ATPase At2g46620 (491 aa).

A helical membrane pass occupies residues 1-21 (MGILWDSFLLLLVSTFALFLV). 238–245 (GPSGTGKS) serves as a coordination point for ATP. A disordered region spans residues 423–460 (GTGRRLLLENGSRKSTSEDVSDDMSGSLCGGGGGSSPA).

This sequence belongs to the AAA ATPase family. BCS1 subfamily. Requires Mg(2+) as cofactor.

The protein resides in the membrane. The catalysed reaction is ATP + H2O = ADP + phosphate + H(+). In Arabidopsis thaliana (Mouse-ear cress), this protein is AAA-ATPase At2g46620.